A 217-amino-acid chain; its full sequence is Adenylate kinase (217 aa).

10–15 contacts ATP; sequence GAGKGT. Positions 30-59 are NMP; the sequence is STGDMLRAAVKAGTPLGVEAKKVMDAGGLV. AMP contacts are provided by residues Thr31, Arg36, 57 to 59, 85 to 88, and Gln92; these read GLV and GFPR. Residues 122–159 are LID; the sequence is GRRAHLASGRTYHVKYNPPKVAGKDDLTGEDLVQRDDD. ATP contacts are provided by residues Arg123 and 132 to 133; that span reads TY. Positions 156 and 167 each coordinate AMP. Gly203 lines the ATP pocket.

This sequence belongs to the adenylate kinase family. As to quaternary structure, monomer.

It localises to the cytoplasm. It carries out the reaction AMP + ATP = 2 ADP. Its pathway is purine metabolism; AMP biosynthesis via salvage pathway; AMP from ADP: step 1/1. Catalyzes the reversible transfer of the terminal phosphate group between ATP and AMP. Plays an important role in cellular energy homeostasis and in adenine nucleotide metabolism. The chain is Adenylate kinase from Aromatoleum aromaticum (strain DSM 19018 / LMG 30748 / EbN1) (Azoarcus sp. (strain EbN1)).